A 150-amino-acid polypeptide reads, in one-letter code: MCLFDQGKAVLVRTVGWPDLFVVGNIVTHIILWRVVKWRDPNGIGTKLFDVLQLGGNTLHITPTIVVGVFETCGINLINCGLFPPLGFCFWMCRRNSHCTLLSYLYEKTFTFVCVFGLVNGTYILVQLIPRVKKSSLLIYVCGRLTNDRK.

This is an uncharacterized protein from Saccharomyces cerevisiae (strain ATCC 204508 / S288c) (Baker's yeast).